Consider the following 644-residue polypeptide: Exoribonuclease 2 (644 aa).

One can recognise an RNB domain in the interval 189–516; the sequence is REDLTALNFV…NHRLLKAIIT (328 aa). Positions 561-643 constitute an S1 motif domain; that stretch reads DTRFTAEIID…ETRNVIARPV (83 aa).

This sequence belongs to the RNR ribonuclease family. RNase II subfamily.

It localises to the cytoplasm. It catalyses the reaction Exonucleolytic cleavage in the 3'- to 5'-direction to yield nucleoside 5'-phosphates.. Involved in mRNA degradation. Hydrolyzes single-stranded polyribonucleotides processively in the 3' to 5' direction. The chain is Exoribonuclease 2 from Yersinia pseudotuberculosis serotype O:3 (strain YPIII).